The following is a 256-amino-acid chain: Undecaprenyl-diphosphatase (256 aa).

8 consecutive transmembrane segments (helical) span residues 5 to 25, 41 to 61, 74 to 94, 100 to 120, 135 to 155, 180 to 200, 208 to 228, and 234 to 254; these read IIEIIILSIVQGISEFLPISS, NSLMIDVSLHLGSLLAIVFYF, LLSLLIIGSIPIVIAGYVISS, LLENNLKIIAWTTLIFGIILY, LNFKTILYIGLFQILALIPGV, FLLAIPAIAGASVLQLKNAIG, LVLISITLSFLFSYFTVKFFL, and FSLNVFVIYRIIISIILFIII.

This sequence belongs to the UppP family.

It localises to the cell inner membrane. The enzyme catalyses di-trans,octa-cis-undecaprenyl diphosphate + H2O = di-trans,octa-cis-undecaprenyl phosphate + phosphate + H(+). Catalyzes the dephosphorylation of undecaprenyl diphosphate (UPP). Confers resistance to bacitracin. The polypeptide is Undecaprenyl-diphosphatase (Pelagibacter ubique (strain HTCC1062)).